Reading from the N-terminus, the 261-residue chain is Early E1A protein (261 aa).

Residues 43–51 (PTLHDLYDL) are interaction with RB1 in competition with E2F1. The tract at residues 78–149 (EGLDINPPPE…VNEGVKAASD (72 aa)) is interaction with UBE2I. The PXLXP motif, interaction with host ZMYND11 motif lies at 106–110 (PDLGA). The LXCXE motif, interaction with host RB1 and TMEM173/STING motif lies at 115–119 (LRCYE). A zinc finger spans residues 163-183 (CKSCEFHRNNTGMKELLCSLC). Residues 197-261 (SDDESPSPDS…DLSTRKLPRQ (65 aa)) are disordered. The span at 203–212 (SPDSTTSPPE) shows a compositional bias: low complexity. The PXDLS motif, CTBP-binding motif lies at 250–254 (PLDLS). Positions 256 to 261 (RKLPRQ) match the Nuclear localization signal motif.

This sequence belongs to the adenoviridae E1A protein family. In terms of assembly, interacts with host UBE2I; this interaction interferes with polySUMOylation. Interacts with host RB1; this interaction induces the aberrant dissociation of RB1-E2F1 complex thereby disrupting the activity of RB1 and activating E2F1-regulated genes. Interacts with host ATF7; the interaction enhances ATF7-mediated viral transactivation activity which requires the zinc binding domains of both proteins. Isoform early E1A 32 kDa protein and isoform early E1A 26 kDa protein interact (via N-terminus) with CUL1 and E3 ubiquitin ligase RBX1; these interactions inhibit RBX1-CUL1-dependent elongation reaction of ubiquitin chains and attenuate ubiquitination of SCF(FBXW7) target proteins. Interacts (via PXLXP motif) with host ZMYND11/BS69 (via MYND-type zinc finger); this interaction inhibits E1A mediated transactivation. Interacts with host EP300; this interaction stimulates the acetylation of RB1 by recruiting EP300 and RB1 into a multimeric-protein complex. Interacts with host CTBP1 and CTBP2; this interaction seems to potentiate viral replication. Interacts with host DCAF7. Interacts with host DYRK1A. Interacts with host KPNA4; this interaction allows E1A import into the host nucleus. Interacts with host EP400; this interaction stabilizes MYC. Interacts with host TBP protein; this interaction probably disrupts the TBP-TATA complex. Interacts (via LXCXE motif) with host TMEM173/STING; this interaction impairs the ability of TMEM173/STING to sense cytosolic DNA and promote the production of type I interferon (IFN-alpha and IFN-beta). Interacts (via C-terminus) with host ZBED1/hDREF (via C-terminus); the interaction is direct.

The protein resides in the host nucleus. In terms of biological role, plays a role in viral genome replication by driving entry of quiescent cells into the cell cycle. Stimulation of progression from G1 to S phase allows the virus to efficiently use the cellular DNA replicating machinery to achieve viral genome replication. E1A protein has both transforming and trans-activating activities. Induces the disassembly of the E2F1 transcription factor from RB1 by direct competition for the same binding site on RB1, with subsequent transcriptional activation of E2F1-regulated S-phase genes and of the E2 region of the adenoviral genome. Release of E2F1 leads to the ARF-mediated inhibition of MDM2 and causes TP53/p53 to accumulate because it is not targeted for degradation by MDM2-mediated ubiquitination anymore. This increase in TP53, in turn, would arrest the cell proliferation and direct its death but this effect is counteracted by the viral protein E1B-55K. Inactivation of the ability of RB1 to arrest the cell cycle is critical for cellular transformation, uncontrolled cellular growth and proliferation induced by viral infection. Interaction with RBX1 and CUL1 inhibits ubiquitination of the proteins targeted by SCF(FBXW7) ubiquitin ligase complex, and may be linked to unregulated host cell proliferation. The tumorigenesis-restraining activity of E1A may be related to the disruption of the host CtBP-CtIP complex through the CtBP binding motif. Interaction with host TMEM173/STING impairs the ability of TMEM173/STING to sense cytosolic DNA and promote the production of type I interferon (IFN-alpha and IFN-beta). Promotes the sumoylation of host ZBED1/hDREF with SUMO1. This is Early E1A protein from Human adenovirus B serotype 7 (HAdV-7).